The following is a 114-amino-acid chain: uncharacterized protein (114 aa).

Residues 13-99 (YYAVIFSSVK…VWYESYAVRV (87 aa)) form the ABM domain.

This is an uncharacterized protein from Bacillus subtilis (strain 168).